The chain runs to 436 residues: tRNA (guanine(37)-N(1))-methyltransferase 1 (436 aa).

Residues His229, 277 to 278 (DL), and Asn325 contribute to the S-adenosyl-L-methionine site.

Belongs to the class I-like SAM-binding methyltransferase superfamily. TRM5/TYW2 family. In terms of assembly, monomer.

Its subcellular location is the mitochondrion matrix. The protein localises to the nucleus. The protein resides in the cytoplasm. The enzyme catalyses guanosine(37) in tRNA + S-adenosyl-L-methionine = N(1)-methylguanosine(37) in tRNA + S-adenosyl-L-homocysteine + H(+). Specifically methylates the N1 position of guanosine-37 in various cytoplasmic and mitochondrial tRNAs. Methylation is not dependent on the nature of the nucleoside 5' of the target nucleoside. This is the first step in the biosynthesis of wybutosine (yW), a modified base adjacent to the anticodon of tRNAs and required for accurate decoding. This chain is tRNA (guanine(37)-N(1))-methyltransferase 1, found in Phaeodactylum tricornutum (strain CCAP 1055/1).